A 458-amino-acid polypeptide reads, in one-letter code: Argininosuccinate lyase (458 aa).

The protein belongs to the lyase 1 family. Argininosuccinate lyase subfamily.

Its subcellular location is the cytoplasm. The enzyme catalyses 2-(N(omega)-L-arginino)succinate = fumarate + L-arginine. It participates in amino-acid biosynthesis; L-arginine biosynthesis; L-arginine from L-ornithine and carbamoyl phosphate: step 3/3. This Anoxybacillus flavithermus (strain DSM 21510 / WK1) protein is Argininosuccinate lyase.